The following is a 418-amino-acid chain: Gamma-glutamyl phosphate reductase (418 aa).

This sequence belongs to the gamma-glutamyl phosphate reductase family.

The protein localises to the cytoplasm. It catalyses the reaction L-glutamate 5-semialdehyde + phosphate + NADP(+) = L-glutamyl 5-phosphate + NADPH + H(+). It functions in the pathway amino-acid biosynthesis; L-proline biosynthesis; L-glutamate 5-semialdehyde from L-glutamate: step 2/2. Functionally, catalyzes the NADPH-dependent reduction of L-glutamate 5-phosphate into L-glutamate 5-semialdehyde and phosphate. The product spontaneously undergoes cyclization to form 1-pyrroline-5-carboxylate. The chain is Gamma-glutamyl phosphate reductase from Geobacter metallireducens (strain ATCC 53774 / DSM 7210 / GS-15).